Consider the following 419-residue polypeptide: Tol-Pal system protein TolB (419 aa).

Positions 1–19 (MFNRIISLFLLLFTGQVIA) are cleaved as a signal peptide.

Belongs to the TolB family. In terms of assembly, the Tol-Pal system is composed of five core proteins: the inner membrane proteins TolA, TolQ and TolR, the periplasmic protein TolB and the outer membrane protein Pal. They form a network linking the inner and outer membranes and the peptidoglycan layer.

It localises to the periplasm. Part of the Tol-Pal system, which plays a role in outer membrane invagination during cell division and is important for maintaining outer membrane integrity. The chain is Tol-Pal system protein TolB from Legionella pneumophila (strain Corby).